The sequence spans 645 residues: Translation factor GUF1, mitochondrial (645 aa).

Residues 44-228 form the tr-type G domain; the sequence is ENYRNFSIVA…AIIDRIPPPT (185 aa). GTP-binding positions include 53–60, 120–124, and 174–177; these read AHVDHGKS, DTPGH, and NKID.

This sequence belongs to the TRAFAC class translation factor GTPase superfamily. Classic translation factor GTPase family. LepA subfamily.

The protein resides in the mitochondrion inner membrane. The enzyme catalyses GTP + H2O = GDP + phosphate + H(+). In terms of biological role, promotes mitochondrial protein synthesis. May act as a fidelity factor of the translation reaction, by catalyzing a one-codon backward translocation of tRNAs on improperly translocated ribosomes. Binds to mitochondrial ribosomes in a GTP-dependent manner. This Saccharomyces cerevisiae (strain RM11-1a) (Baker's yeast) protein is Translation factor GUF1, mitochondrial.